Here is a 228-residue protein sequence, read N- to C-terminus: 2,3-bisphosphoglycerate-dependent phosphoglycerate mutase (228 aa).

Residues 8-15, 21-22, Arg-60, 87-90, Lys-98, 114-115, and 183-184 contribute to the substrate site; these read RHGQSEWN, TG, ERHY, RR, and GN. The Tele-phosphohistidine intermediate role is filled by His-9. Glu-87 acts as the Proton donor/acceptor in catalysis.

This sequence belongs to the phosphoglycerate mutase family. BPG-dependent PGAM subfamily.

It catalyses the reaction (2R)-2-phosphoglycerate = (2R)-3-phosphoglycerate. It participates in carbohydrate degradation; glycolysis; pyruvate from D-glyceraldehyde 3-phosphate: step 3/5. Functionally, catalyzes the interconversion of 2-phosphoglycerate and 3-phosphoglycerate. The chain is 2,3-bisphosphoglycerate-dependent phosphoglycerate mutase from Staphylococcus haemolyticus (strain JCSC1435).